The chain runs to 360 residues: DNA replication and repair protein RecF (360 aa).

Position 30 to 37 (30 to 37 (GQNGSGKT)) interacts with ATP.

It belongs to the RecF family.

It is found in the cytoplasm. In terms of biological role, the RecF protein is involved in DNA metabolism; it is required for DNA replication and normal SOS inducibility. RecF binds preferentially to single-stranded, linear DNA. It also seems to bind ATP. This Shewanella baltica (strain OS223) protein is DNA replication and repair protein RecF.